A 1854-amino-acid polypeptide reads, in one-letter code: MSSSSNSDPSSSPDNTDFIPLKDNPKDTSSYINKKNPFVNDSFDSHDDSYLDNVNPFEYNVADDEDTISMTSDGVEFHNLGITETVDEQDKILSELQLAYPTVSRYSETLDKGLLNGDKTTKGDYTSLRRFRKPFLFDKLSPYFTHFFSEIYAAVLRVVGPPRANETPGRNLPFSPILRQIYNHPLYNIFIFVVIVLHAVLLMIRSDDPHDKSQTIDYLIIVIGILYTLEMLLKIYLFGFLYDGSSSFYDFINSYTKKTPRTMSYLRHSWNRVDFVAIVALWISVIGKKQQGIFRLFSMIACLRLTRLLNITRKTETILKSLKESSTPLVQVVSFNAFFGVMIAILGVQFFKASLNRQCVWLGDYGDQYLPTGQFCGGHWENGIKRAYLDKNGFPSNVNPRGFICAEKSVCRVVENPYSNTVSFDNFFNSLELIFVIMSSNGFTDIMYDIMDAEYFVSCLLFIISAYFLTLWLMSLVIAVVTSSFIDLQHSGKNQKEQKSVDKHLIRNKLCEKYLFYSNFIWISFIVAQFVTLCTQTYDQTSSTANRYLIFYACVDFLLAAEVILRFFAYLPDYRLFFRRYTNLVDIVLAVLNLVTLLPSIRKNPVAFGWLSIFAIARIYRCILLIPYTRKIAKLLFSNFKQLLNLMLFLVIVLFIASLCAVRLFQDLPNDGDSDDDAISFATTYESFLYMYQILTSENWTDVMFAIQARLAHLHLSWIPGAFFTLWFLFSNNVVLSMFIAVIQVNFAPSESDLKMEQLKMYLARLLRNYNPFQASLTLNALIKRNGSRKGKTVDESHYEWLYEDNIIKGFLRVTNIPPKEPLKPSLDTSPELSKYSLAKLSNNFKRFVMRDDPFSQAYFKRVIGIRWEKDMNLKTAAKDMQAAKAFVRIKQTEFLKNHPKYNDVFWVIKPSNRIRRFCQRLVMPGVNERYGGVEPYQWVYRVIQVFIYACILTAVIIECIATPIYERDHLLNDKQHAWFVWTEVAFATIFTIEAAIKIIADGFCITPNAYLRSTWNCIDFFVLVTLWINLYAVLTSHALLSRAFRAFKALRVLRLINLTQTSQRMFHDALISGFFKIFSAAVVSATLLIPFALWAKNVFGGLLYSCNDDNVLSASQCVLEYASTPNNWEVWAPRVWSNPPDYDFDRFPHALLALFEIASIEGWVDIMRSVMDITGFNNQPQTNASSGNAMFFVLFNLVSMIYILTLFIAIIISNYAERTGSAFFTAEQRAWLELRRKIKSMRPSKRPAIRPLGLRGLCYDFAVQKHGIWRRTFTGLYIVHLLFLLTIFYPCPIAYTYVRNSIFLILSICYTINICVKVYGLSFYYFFHSFWNMFDVVVTLGSLTCNIAILAKFENRSLTLLQTTLLVLVTVHLIPKFDNFDQLSKTVVASLPSIFSLIATWIVLYITFAIAFNQIFGLTKLGLNGGPNKNFRSIRNALVLLFTMTFGEGWNDVMHDYTISYPNCVNGDDFYNSDCGNKPWAYGLFIAWNIISMYIFVNMFITVVFDNFSYIHTKSSSFTNLQRNDFRQFKDSWAPFDPMVTGYIPKRNAVKFVLSLRGVYDFRIYRDEHTLRSIISKVQSKTGQQSVPMLENPLMGSEINLEALDQIIDTIDVNVVKERRNVLNSLCTEIMTLPGNVISFSNILMLVVLHKIVDHREAFPISDYIRRAYVLSELEKSIRMEKLLGLVETSIIRKTFLQHMEEKKKALENPFILLSEVSEILPETPIQEVLRQHNADPEQLLMSTRTPSVSDRSFSIVESTVPTIASGEGDDNHSVEDHLKVPTDNEPRRSPSLKEVLLRGSHSLHSNNDRTSFDIEAGFGTAESDFQFGGATEDINRIADRIDDYLDRDSFKG.

Over residues 1-15 (MSSSSNSDPSSSPDN) the composition is skewed to low complexity. A disordered region spans residues 1 to 33 (MSSSSNSDPSSSPDNTDFIPLKDNPKDTSSYIN). N-linked (GlcNAc...) asparagine glycosylation is present at asparagine 40. Helical transmembrane passes span 184–204 (HPLY…LLMI), 220–240 (IIVI…LFGF), and 274–294 (DFVA…QGIF). Residue asparagine 310 is glycosylated (N-linked (GlcNAc...) asparagine). The next 8 membrane-spanning stretches (helical) occupy residues 328–348 (PLVQ…ILGV), 427–447 (FFNS…TDIM), 461–481 (LFII…IAVV), 514–534 (YLFY…VTLC), 549–569 (LIFY…RFFA), 581–601 (YTNL…LPSI), 606–626 (VAFG…ILLI), and 642–662 (QLLN…LCAV). N-linked (GlcNAc...) asparagine glycosylation occurs at asparagine 699. The chain crosses the membrane as a helical span at residues 723-743 (FFTLWFLFSNNVVLSMFIAVI). N-linked (GlcNAc...) asparagine glycosylation occurs at asparagine 786. Transmembrane regions (helical) follow at residues 946–966 (VFIY…TPIY), 980–1000 (FVWT…IKII), and 1021–1041 (FFVL…HALL). A glycan (N-linked (GlcNAc...) asparagine) is linked at asparagine 1058. 2 consecutive transmembrane segments (helical) span residues 1075-1095 (FFKI…FALW) and 1148-1168 (FPHA…VDIM). An N-linked (GlcNAc...) asparagine glycan is attached at asparagine 1184. 4 helical membrane-spanning segments follow: residues 1193-1213 (FVLF…AIII), 1274-1294 (FTGL…PCPI), 1302-1322 (SIFL…VYGL), and 1331-1351 (FWNM…IAIL). A glycan (N-linked (GlcNAc...) asparagine) is linked at asparagine 1356. Helical transmembrane passes span 1358 to 1378 (SLTL…IPKF), 1393 to 1413 (PSIF…AIAF), and 1486 to 1506 (FIAW…TVVF). 2 N-linked (GlcNAc...) asparagine glycosylation sites follow: asparagine 1508 and asparagine 1773. Residues 1764–1792 (TIASGEGDDNHSVEDHLKVPTDNEPRRSP) form a disordered region. Basic and acidic residues predominate over residues 1771 to 1790 (DDNHSVEDHLKVPTDNEPRR).

The protein belongs to the calcium channel alpha-1 subunit (TC 1.A.1.11) family. As to quaternary structure, interacts with yam8 to form a Ca(2+) influx channel.

The protein localises to the cell membrane. Its function is as follows. Voltage-gated, high-affinity calcium channel that functions together with yam8 to mediate calcium entry into cells. Required during conditions of environmental stress. This is Calcium-channel protein cch1 (cch1) from Schizosaccharomyces pombe (strain 972 / ATCC 24843) (Fission yeast).